Here is a 280-residue protein sequence, read N- to C-terminus: Ribosomal RNA small subunit methyltransferase A (280 aa).

6 residues coordinate S-adenosyl-L-methionine: His-15, Leu-17, Gly-42, Glu-64, Asp-89, and Asn-109.

It belongs to the class I-like SAM-binding methyltransferase superfamily. rRNA adenine N(6)-methyltransferase family. RsmA subfamily.

Its subcellular location is the cytoplasm. It carries out the reaction adenosine(1518)/adenosine(1519) in 16S rRNA + 4 S-adenosyl-L-methionine = N(6)-dimethyladenosine(1518)/N(6)-dimethyladenosine(1519) in 16S rRNA + 4 S-adenosyl-L-homocysteine + 4 H(+). In terms of biological role, specifically dimethylates two adjacent adenosines (A1518 and A1519) in the loop of a conserved hairpin near the 3'-end of 16S rRNA in the 30S particle. May play a critical role in biogenesis of 30S subunits. This Prochlorococcus marinus (strain MIT 9303) protein is Ribosomal RNA small subunit methyltransferase A.